The chain runs to 428 residues: 3-phosphoshikimate 1-carboxyvinyltransferase (428 aa).

Residues Lys21, Ser22, and Arg26 each coordinate 3-phosphoshikimate. Lys21 serves as a coordination point for phosphoenolpyruvate. 2 residues coordinate phosphoenolpyruvate: Gly91 and Arg119. The 3-phosphoshikimate site is built by Ser164, Gln166, Asp313, and Lys340. Position 166 (Gln166) interacts with phosphoenolpyruvate. Residue Asp313 is the Proton acceptor of the active site. Residues Arg344 and Arg386 each coordinate phosphoenolpyruvate.

It belongs to the EPSP synthase family. Monomer.

The protein resides in the cytoplasm. The enzyme catalyses 3-phosphoshikimate + phosphoenolpyruvate = 5-O-(1-carboxyvinyl)-3-phosphoshikimate + phosphate. The protein operates within metabolic intermediate biosynthesis; chorismate biosynthesis; chorismate from D-erythrose 4-phosphate and phosphoenolpyruvate: step 6/7. Its function is as follows. Catalyzes the transfer of the enolpyruvyl moiety of phosphoenolpyruvate (PEP) to the 5-hydroxyl of shikimate-3-phosphate (S3P) to produce enolpyruvyl shikimate-3-phosphate and inorganic phosphate. This chain is 3-phosphoshikimate 1-carboxyvinyltransferase, found in Campylobacter jejuni subsp. jejuni serotype O:2 (strain ATCC 700819 / NCTC 11168).